We begin with the raw amino-acid sequence, 183 residues long: Acidic proline-rich protein HP43A (183 aa).

Positions 1-14 (MLVVLLTAALLAEH) are cleaved as a signal peptide. A disordered region spans residues 22–183 (ISQLSEEEQQ…QGSEEQSTSL (162 aa)). Residues 52–65 (SDEEGDDDGEEDGN) show a composition bias toward acidic residues. A run of 5 repeats spans residues 81–100 (RPPK…QQQN), 101–120 (RPPK…QQQN), 121–140 (RPPK…QQQN), 141–160 (RPPK…QQQN), and 161–180 (RPPK…EEQS). A compositionally biased stretch (low complexity) spans 86–183 (GNQQGPPQQE…QGSEEQSTSL (98 aa)).

The protein localises to the secreted. In Mesocricetus auratus (Golden hamster), this protein is Acidic proline-rich protein HP43A (H29).